The primary structure comprises 671 residues: Talaropentaene synthase (671 aa).

Aspartate 92 provides a ligand contact to Mg(2+). A DDXXD 1 motif is present at residues 92-96; that stretch reads DDMTD. The short motif at 223–231 is the NSE/DTE element; the sequence is NDLYSYEKE. 3 residues coordinate isopentenyl diphosphate: lysine 389, arginine 392, and histidine 421. The Mg(2+) site is built by aspartate 428 and aspartate 432. The short motif at 428–432 is the DDXXD 2 element; sequence DDIED. A dimethylallyl diphosphate-binding site is contributed by arginine 437. Arginine 438 is an isopentenyl diphosphate binding site. The dimethylallyl diphosphate site is built by lysine 515, threonine 516, glutamine 551, asparagine 558, lysine 568, and lysine 578.

It in the N-terminal section; belongs to the terpene synthase family. The protein in the C-terminal section; belongs to the FPP/GGPP synthase family. Mg(2+) serves as cofactor.

The enzyme catalyses 5 isopentenyl diphosphate + dimethylallyl diphosphate = all-trans-hexaprenyl diphosphate + 5 diphosphate. It catalyses the reaction all-trans-hexaprenyl diphosphate = talaropentaene + diphosphate. In terms of biological role, bifunctional terpene synthase that converts dimethylallyl diphosphate (DMAPP) and isopentenyl diphosphate (IPP) into talaropentaene as a single product. The C-terminal prenyltransferase (PT) domain of MpMS catalyzes formation of hexaprenyl diphosphate (HexPP), whereas the N-terminal terpene cyclase (TC) domain catalyzes the cyclization of HexPP to talaropentaene. The chain is Talaropentaene synthase from Talaromyces verruculosus (Penicillium verruculosum).